Here is a 1239-residue protein sequence, read N- to C-terminus: MSRLLWRKVAGATVGPGPVPAPGRWVSSSVPASDPSDGQRRRQQQQQQQQQQQQQPQQPQVLSSEGGQLRHNPLDIQMLSRGLHEQIFGQGGEMPGEAAVRRSVEHLQKHGLWGQPAVPLPDVELRLPPLYGDNLDQHFRLLAQKQSLPYLEAANLLLQAQLPPKPPAWAWAEGWTRYGPEGEAVPVAIPEERALVFDVEVCLAEGTCPTLAVAISPSAWYSWCSQRLVEERYSWTSQLSPADLIPLEVPTGASSPTQRDWQEQLVVGHNVSFDRAHIREQYLIQGSRMRFLDTMSMHMAISGLSSFQRSLWIAAKQGKHKVQPPTKQGQKSQRKARRGPAISSWDWLDISSVNSLAEVHRLYVGGPPLEKEPRELFVKGTMKDIRENFQDLMQYCAQDVWATHEVFQQQLPLFLERCPHPVTLAGMLEMGVSYLPVNQNWERYLAEAQGTYEELQREMKKSLMDLANDACQLLSGERYKEDPWLWDLEWDLQEFKQKKAKKVKKEPATASKLPIEGAGAPGDPMDQEDLGPCSEEEEFQQDVMARACLQKLKGTTELLPKRPQHLPGHPGWYRKLCPRLDDPAWTPGPSLLSLQMRVTPKLMALTWDGFPLHYSERHGWGYLVPGRRDNLAKLPTGTTLESAGVVCPYRAIESLYRKHCLEQGKQQLMPQEAGLAEEFLLTDNSAIWQTVEELDYLEVEAEAKMENLRAAVPGQPLALTARGGPKDTQPSYHHGNGPYNDVDIPGCWFFKLPHKDGNSCNVGSPFAKDFLPKMEDGTLQAGPGGASGPRALEINKMISFWRNAHKRISSQMVVWLPRSALPRAVIRHPDYDEEGLYGAILPQVVTAGTITRRAVEPTWLTASNARPDRVGSELKAMVQAPPGYTLVGADVDSQELWIAAVLGDAHFAGMHGCTAFGWMTLQGRKSRGTDLHSKTATTVGISREHAKIFNYGRIYGAGQPFAERLLMQFNHRLTQQEAAEKAQQMYAATKGLRWYRLSDEGEWLVRELNLPVDRTEGGWISLQDLRKVQRETARKSQWKKWEVVAERAWKGGTESEMFNKLESIATSDIPRTPVLGCCISRALEPSAVQEEFMTSRVNWVVQSSAVDYLHLMLVAMKWLFEEFAIDGRFCISIHDEVRYLVREEDRYRAALALQITNLLTRCMFAYKLGLNDLPQSVAFFSAVDIDRCLRKEVTMDCKTPSNPTGMERRYGIPQGEALDIYQIIELTKGSLEKRSQPGP.

Residues M1–Q68 form a disordered region. Composition is skewed to low complexity over residues V9–S36 and Q44–Q60. Positions Q43–Q55 are does not contribute to polymerase and exonuclease enzymatic activities. Positions V196–E200 match the Exo I motif. D198 (exonuclease activity) is an active-site residue. The Exo II motif lies at V267 to R275. S306 contacts DNA. The interval G318–P340 is disordered. Positions Y395–T403 match the Exo III motif. Residues E506–G531 form a disordered region. Positions A510–G571 are accessory-interacting determinant. R579 contributes to the RNA binding site. S593 is a binding site for DNA. RNA contacts are provided by H754, G763, and K768. Positions 806 and 849 each coordinate DNA. Residues T858–N864 form a trigger loop region. RNA is bound by residues S863 and R869. Residues V887–L896 carry the Pol A motif. A 2'-deoxyribonucleoside 5'-triphosphate is bound by residues D890, V891, S893, E895, R943, K947, and Y951. The Mg(2+) site is built by D890 and V891. Positions R943 to G958 match the Pol B motif. Positions 1094 and 1095 each coordinate DNA. A Pol C motif is present at residues H1134 to V1141. D1135 contributes to the a 2'-deoxyribonucleoside 5'-triphosphate binding site. D1135 contributes to the Mg(2+) binding site.

The protein belongs to the DNA polymerase type-A family. As to quaternary structure, heterotrimer composed of a catalytic subunit and a homodimer of accessory subunits (POLG:POLG2). Interacts with TTC3. Interacts with LIG3. Requires Mg(2+) as cofactor.

The protein localises to the mitochondrion. It is found in the mitochondrion matrix. The protein resides in the mitochondrion nucleoid. The enzyme catalyses DNA(n) + a 2'-deoxyribonucleoside 5'-triphosphate = DNA(n+1) + diphosphate. It catalyses the reaction a 3'-end 2'-deoxyribonucleotidyl-deoxyribonucleotide-DNA + H2O = a 3'-end 2'-deoxyribonucleotide-DNA + a 2'-deoxyribonucleoside 5'-phosphate + H(+). The catalysed reaction is a 5'-end 2'-deoxyribose-2'-deoxyribonucleotide-DNA = (2E,4S)-4-hydroxypenten-2-al-5-phosphate + a 5'-end 5'-phospho-2'-deoxyribonucleoside-DNA + H(+). Inhibited by dideoxynucleotides such as antiviral agent zalcitabine. Its function is as follows. Catalytic subunit of DNA polymerase gamma solely responsible for replication of mitochondrial DNA (mtDNA). Replicates both heavy and light strands of the circular mtDNA genome using a single-stranded DNA template, RNA primers and the four deoxyribonucleoside triphosphates as substrates. Has 5' -&gt; 3' polymerase activity. Functionally interacts with TWNK and SSBP1 at the replication fork to form a highly processive replisome, where TWNK unwinds the double-stranded DNA template prior to replication and SSBP1 covers the parental heavy strand to enable continuous replication of the entire mitochondrial genome. A single nucleotide incorporation cycle includes binding of the incoming nucleotide at the insertion site, a phosphodiester bond formation reaction that extends the 3'-end of the primer DNA, and translocation of the primer terminus to the post-insertion site. After completing replication of a mtDNA strand, mediates 3' -&gt; 5' exonucleolytic degradation at the nick to enable proper ligation. Highly accurate due to high nucleotide selectivity and 3' -&gt; 5' exonucleolytic proofreading. Proficiently corrects base substitutions, single-base additions and deletions in non-repetitive sequences and short repeats, but displays lower proofreading activity when replicating longer homopolymeric stretches. Exerts exonuclease activity toward single-stranded DNA and double-stranded DNA containing 3'-terminal mispairs. When a misincorporation occurs, transitions from replication to a pro-nucleolytic editing mode and removes the missincorporated nucleoside in the exonuclease active site. Proceeds via an SN2 nucleolytic mechanism in which Asp-198 catalyzes phosphodiester bond hydrolysis and Glu-200 stabilizes the leaving group. As a result the primer strand becomes one nucleotide shorter and is positioned in the post-insertion site, ready to resume DNA synthesis. Exerts 5'-deoxyribose phosphate (dRP) lyase activity and mediates repair-associated mtDNA synthesis (gap filling) in base-excision repair pathway. Catalyzes the release of the 5'-terminal 2-deoxyribose-5-phosphate sugar moiety from incised apurinic/apyrimidinic (AP) sites to produce a substrate for DNA ligase. The dRP lyase reaction does not require divalent metal ions and likely proceeds via a Schiff base intermediate in a beta-elimination reaction mechanism. The chain is DNA polymerase subunit gamma-1 from Homo sapiens (Human).